The following is a 245-amino-acid chain: Biosynthetic peptidoglycan transglycosylase (245 aa).

The chain crosses the membrane as a helical span at residues Leu29–Pro49.

Belongs to the glycosyltransferase 51 family.

It is found in the cell inner membrane. It catalyses the reaction [GlcNAc-(1-&gt;4)-Mur2Ac(oyl-L-Ala-gamma-D-Glu-L-Lys-D-Ala-D-Ala)](n)-di-trans,octa-cis-undecaprenyl diphosphate + beta-D-GlcNAc-(1-&gt;4)-Mur2Ac(oyl-L-Ala-gamma-D-Glu-L-Lys-D-Ala-D-Ala)-di-trans,octa-cis-undecaprenyl diphosphate = [GlcNAc-(1-&gt;4)-Mur2Ac(oyl-L-Ala-gamma-D-Glu-L-Lys-D-Ala-D-Ala)](n+1)-di-trans,octa-cis-undecaprenyl diphosphate + di-trans,octa-cis-undecaprenyl diphosphate + H(+). It participates in cell wall biogenesis; peptidoglycan biosynthesis. Functionally, peptidoglycan polymerase that catalyzes glycan chain elongation from lipid-linked precursors. The sequence is that of Biosynthetic peptidoglycan transglycosylase from Shewanella amazonensis (strain ATCC BAA-1098 / SB2B).